The chain runs to 155 residues: 2-C-methyl-D-erythritol 2,4-cyclodiphosphate synthase (155 aa).

A divalent metal cation-binding residues include aspartate 9 and histidine 11. Residues 9–11 (DSH) and 35–36 (HS) contribute to the 4-CDP-2-C-methyl-D-erythritol 2-phosphate site. Histidine 43 lines the a divalent metal cation pocket. 4-CDP-2-C-methyl-D-erythritol 2-phosphate is bound at residue 57-59 (DIG).

Belongs to the IspF family. Homotrimer. It depends on a divalent metal cation as a cofactor.

The enzyme catalyses 4-CDP-2-C-methyl-D-erythritol 2-phosphate = 2-C-methyl-D-erythritol 2,4-cyclic diphosphate + CMP. It functions in the pathway isoprenoid biosynthesis; isopentenyl diphosphate biosynthesis via DXP pathway; isopentenyl diphosphate from 1-deoxy-D-xylulose 5-phosphate: step 4/6. Its function is as follows. Involved in the biosynthesis of isopentenyl diphosphate (IPP) and dimethylallyl diphosphate (DMAPP), two major building blocks of isoprenoid compounds. Catalyzes the conversion of 4-diphosphocytidyl-2-C-methyl-D-erythritol 2-phosphate (CDP-ME2P) to 2-C-methyl-D-erythritol 2,4-cyclodiphosphate (ME-CPP) with a corresponding release of cytidine 5-monophosphate (CMP). This Koribacter versatilis (strain Ellin345) protein is 2-C-methyl-D-erythritol 2,4-cyclodiphosphate synthase.